We begin with the raw amino-acid sequence, 693 residues long: Polyribonucleotide nucleotidyltransferase (693 aa).

Residues Asp489 and Asp495 each coordinate Mg(2+). The region spanning 556–615 (PQIHVMNINPAKIKDVVGRGGATVKGIVEKTGAQIDTSDSGEVKVFAKDKKSMDMAVAMI) is the KH domain. In terms of domain architecture, S1 motif spans 625-693 (GQVYKGKIVK…GRVKLSLVAR (69 aa)).

This sequence belongs to the polyribonucleotide nucleotidyltransferase family. Component of the RNA degradosome, which is a multiprotein complex involved in RNA processing and mRNA degradation. Mg(2+) serves as cofactor.

It is found in the cytoplasm. It carries out the reaction RNA(n+1) + phosphate = RNA(n) + a ribonucleoside 5'-diphosphate. In terms of biological role, involved in mRNA degradation. Catalyzes the phosphorolysis of single-stranded polyribonucleotides processively in the 3'- to 5'-direction. This chain is Polyribonucleotide nucleotidyltransferase, found in Francisella tularensis subsp. holarctica (strain FTNF002-00 / FTA).